The following is a 384-amino-acid chain: Thylakoid membrane protein TERC, chloroplastic (384 aa).

The N-terminal 48 residues, 1–48 (MSLASVIHHGILPPAKSDRIFLTIPVFPPDFRARGWTKSPFSLLINPS), are a transit peptide targeting the chloroplast. At 49–115 (LASAANRRLS…DYQQEETYKT (67 aa)) the chain is on the stromal side. Residues 68–104 (GIDQEDEEKESRELLPHKNDENATTSRSSSSVDSGGL) form a disordered region. Residues 76-88 (KESRELLPHKNDE) are compositionally biased toward basic and acidic residues. The chain crosses the membrane as a helical span at residues 116–136 (SFKTVALCVGTAVAFGIGIGL). Topologically, residues 137–145 (KEGVGKASE) are lumenal, thylakoid. A helical transmembrane segment spans residues 146 to 166 (FFAGYILEQSLSVDNLFVFVL). The Stromal segment spans residues 167–180 (VFKYFKVPLMYQNK). Residues 181-201 (VLTYGIAGAIVFRFTLILLGT) traverse the membrane as a helical segment. At 202 to 206 (ATLQK) the chain is on the lumenal, thylakoid side. Residues 207–227 (FEAVNLLLAAVLLYSSFKLFA) form a helical membrane-spanning segment. Residues 228–275 (SEEDDTDLSDNFIVKTCQRFIPVTSSYDGNRFFTKHDGILKATPLLLT) lie on the Stromal side of the membrane. Residues 276–296 (VAVIELSDIAFAVDSIPAVFG) traverse the membrane as a helical segment. The Lumenal, thylakoid segment spans residues 297–301 (VTRDP). Residues 302–322 (FIVLTSNLFAILGLRSLYTLI) form a helical membrane-spanning segment. The Stromal segment spans residues 323–335 (SEGMDELEYLQPS). A helical membrane pass occupies residues 336 to 356 (IAVVLGFIGVKMILDFFGFHI). Residue Ser-357 is a topological domain, lumenal, thylakoid. A helical transmembrane segment spans residues 358–378 (TEASLGVVALSLSTGVLLSLT). Residues 379–384 (NKSSDS) are Stromal-facing.

In terms of assembly, interacts with ALB3. As to expression, expressed in roots, rosette and cauline leaves, stems and flowers.

It localises to the plastid. It is found in the chloroplast thylakoid membrane. Its function is as follows. Integral thylakoid membrane protein that plays a crucial role in thylakoid membrane biogenesis and thylakoid formation in early chloroplast development. Is essential for de novo synthesis of photosystem II (PSII) core proteins and required for efficient insertion of thylakoid membrane proteins, presumably via interaction with ALB3. May assist synthesis of thylakoid membrane proteins at the membrane insertion step. The polypeptide is Thylakoid membrane protein TERC, chloroplastic (Arabidopsis thaliana (Mouse-ear cress)).